The primary structure comprises 122 residues: Cadmium resistance transcriptional regulatory protein CadC (122 aa).

C7, C11, C58, and C60 together coordinate Cd(2+). The 96-residue stretch at 24–119 (LQTVDISGVS…IALAHKKEVK (96 aa)) folds into the HTH arsR-type domain. Positions 59 to 78 (VCDIANILGVTIANASHHLR) form a DNA-binding region, H-T-H motif. Residues D101, H103, H114, and E117 each contribute to the Zn(2+) site.

As to quaternary structure, homodimer.

Functionally, metal-binding repressor for the cad operon. Involved in resistance to heavy metals, such as cadmium, bismuth, zinc or lead. Binds 2 metal ions per subunit. Metal binding to the N-terminal regulatory site causes the repressor to dissociate from the DNA. This chain is Cadmium resistance transcriptional regulatory protein CadC (cadC), found in Staphylococcus aureus.